The sequence spans 99 residues: DNA-binding protein HU (99 aa).

The protein belongs to the bacterial histone-like protein family. As to quaternary structure, homodimer.

Functionally, histone-like DNA-binding protein which is capable of wrapping DNA to stabilize it, and thus to prevent its denaturation under extreme environmental conditions. This is DNA-binding protein HU (hup) from Rickettsia typhi (strain ATCC VR-144 / Wilmington).